The chain runs to 176 residues: Putative L,D-transpeptidase YqjB (176 aa).

The N-terminal stretch at 1–25 (MRFFLCSIFMMISPIWPLGENPLPG) is a signal peptide. Positions 27–151 (PYVIVNKRTN…IPVGTRVLIT (125 aa)) constitute a L,D-TPase catalytic domain. Residue histidine 111 is the Proton donor/acceptor of the active site. Cysteine 127 serves as the catalytic Nucleophile.

This sequence belongs to the YkuD family.

It functions in the pathway cell wall biogenesis; peptidoglycan biosynthesis. The sequence is that of Putative L,D-transpeptidase YqjB (yqjB) from Bacillus subtilis (strain 168).